The chain runs to 596 residues: Chaperone protein DnaK (596 aa).

T180 is subject to Phosphothreonine; by autocatalysis.

The protein belongs to the heat shock protein 70 family.

Functionally, acts as a chaperone. The protein is Chaperone protein DnaK of Thermosipho melanesiensis (strain DSM 12029 / CIP 104789 / BI429).